The chain runs to 89 residues: Alpha-latrotoxin associated low molecular weight protein SGV242-280 (89 aa).

The first 18 residues, 1–18 (MSKLHFLILLSVIVSVFC), serve as a signal peptide directing secretion.

It belongs to the arthropod CHH/MIH/GIH/VIH hormone family. As to expression, expressed by the venom gland.

It is found in the secreted. Functionally, may increase the toxicity of alpha-latrotoxin and/or other venom components. Is non-toxic to mice and to the cockroach Periplaneta americana. This Steatoda grossa (False black widow) protein is Alpha-latrotoxin associated low molecular weight protein SGV242-280.